We begin with the raw amino-acid sequence, 120 residues long: V-type proton ATPase subunit F (120 aa).

The protein belongs to the V-ATPase F subunit family. As to quaternary structure, V-ATPase is a heteromultimeric enzyme composed of a peripheral catalytic V1 complex (components A to H) attached to an integral membrane V0 proton pore complex (components: a, c, c', c'', d, e, f and VOA1).

The protein resides in the vacuole membrane. Functionally, subunit of the V1 complex of vacuolar(H+)-ATPase (V-ATPase), a multisubunit enzyme composed of a peripheral complex (V1) that hydrolyzes ATP and a membrane integral complex (V0) that translocates protons. V-ATPase is responsible for acidifying and maintaining the pH of intracellular compartments. The sequence is that of V-type proton ATPase subunit F from Schizosaccharomyces pombe (strain 972 / ATCC 24843) (Fission yeast).